The sequence spans 285 residues: Bifunctional protein FolD (285 aa).

NADP(+) contacts are provided by residues 165–167 (GRS) and S190.

It belongs to the tetrahydrofolate dehydrogenase/cyclohydrolase family. In terms of assembly, homodimer.

It catalyses the reaction (6R)-5,10-methylene-5,6,7,8-tetrahydrofolate + NADP(+) = (6R)-5,10-methenyltetrahydrofolate + NADPH. It carries out the reaction (6R)-5,10-methenyltetrahydrofolate + H2O = (6R)-10-formyltetrahydrofolate + H(+). Its pathway is one-carbon metabolism; tetrahydrofolate interconversion. Its function is as follows. Catalyzes the oxidation of 5,10-methylenetetrahydrofolate to 5,10-methenyltetrahydrofolate and then the hydrolysis of 5,10-methenyltetrahydrofolate to 10-formyltetrahydrofolate. In Staphylococcus haemolyticus (strain JCSC1435), this protein is Bifunctional protein FolD.